A 471-amino-acid polypeptide reads, in one-letter code: Ribulose bisphosphate carboxylase large chain 2 (471 aa).

The substrate site is built by asparagine 116 and threonine 166. Catalysis depends on lysine 168, which acts as the Proton acceptor. Lysine 170 is a substrate binding site. Positions 194, 196, and 197 each coordinate Mg(2+). N6-carboxylysine is present on lysine 194. Catalysis depends on histidine 287, which acts as the Proton acceptor. Residues arginine 288, histidine 320, and serine 372 each contribute to the substrate site.

Belongs to the RuBisCO large chain family. Type I subfamily. In terms of assembly, heterohexadecamer of 8 large chains and 8 small chains; disulfide-linked. The disulfide link is formed within the large subunit homodimers. It depends on Mg(2+) as a cofactor. The disulfide bond which can form in the large chain dimeric partners within the hexadecamer appears to be associated with oxidative stress and protein turnover.

The enzyme catalyses 2 (2R)-3-phosphoglycerate + 2 H(+) = D-ribulose 1,5-bisphosphate + CO2 + H2O. The catalysed reaction is D-ribulose 1,5-bisphosphate + O2 = 2-phosphoglycolate + (2R)-3-phosphoglycerate + 2 H(+). RuBisCO catalyzes two reactions: the carboxylation of D-ribulose 1,5-bisphosphate, the primary event in carbon dioxide fixation, as well as the oxidative fragmentation of the pentose substrate. Both reactions occur simultaneously and in competition at the same active site. The sequence is that of Ribulose bisphosphate carboxylase large chain 2 from Allochromatium vinosum (strain ATCC 17899 / DSM 180 / NBRC 103801 / NCIMB 10441 / D) (Chromatium vinosum).